Here is a 348-residue protein sequence, read N- to C-terminus: Phosphoribosylformylglycinamidine cyclo-ligase (348 aa).

This sequence belongs to the AIR synthase family.

Its subcellular location is the cytoplasm. It carries out the reaction 2-formamido-N(1)-(5-O-phospho-beta-D-ribosyl)acetamidine + ATP = 5-amino-1-(5-phospho-beta-D-ribosyl)imidazole + ADP + phosphate + H(+). Its pathway is purine metabolism; IMP biosynthesis via de novo pathway; 5-amino-1-(5-phospho-D-ribosyl)imidazole from N(2)-formyl-N(1)-(5-phospho-D-ribosyl)glycinamide: step 2/2. The sequence is that of Phosphoribosylformylglycinamidine cyclo-ligase from Ruegeria sp. (strain TM1040) (Silicibacter sp.).